We begin with the raw amino-acid sequence, 103 residues long: Large ribosomal subunit protein uL24 (103 aa).

The protein belongs to the universal ribosomal protein uL24 family. Part of the 50S ribosomal subunit.

Functionally, one of two assembly initiator proteins, it binds directly to the 5'-end of the 23S rRNA, where it nucleates assembly of the 50S subunit. Its function is as follows. One of the proteins that surrounds the polypeptide exit tunnel on the outside of the subunit. This Agathobacter rectalis (strain ATCC 33656 / DSM 3377 / JCM 17463 / KCTC 5835 / VPI 0990) (Eubacterium rectale) protein is Large ribosomal subunit protein uL24.